Consider the following 62-residue polypeptide: Photosystem II reaction center protein Z (62 aa).

The next 2 helical transmembrane spans lie at 8–28 and 41–61; these read AVFALIATSSILLISVPVVFA and FSGTSLWIGLVFLVGILNSLI.

The protein belongs to the PsbZ family. In terms of assembly, PSII is composed of 1 copy each of membrane proteins PsbA, PsbB, PsbC, PsbD, PsbE, PsbF, PsbH, PsbI, PsbJ, PsbK, PsbL, PsbM, PsbT, PsbY, PsbZ, Psb30/Ycf12, at least 3 peripheral proteins of the oxygen-evolving complex and a large number of cofactors. It forms dimeric complexes.

It is found in the plastid. Its subcellular location is the chloroplast thylakoid membrane. May control the interaction of photosystem II (PSII) cores with the light-harvesting antenna, regulates electron flow through the 2 photosystem reaction centers. PSII is a light-driven water plastoquinone oxidoreductase, using light energy to abstract electrons from H(2)O, generating a proton gradient subsequently used for ATP formation. The polypeptide is Photosystem II reaction center protein Z (Coffea arabica (Arabian coffee)).